The primary structure comprises 588 residues: MDQAINHKIHYISRQQRQEILAIARGEAVADYLIENVVILDLINGGEIAGPIAIKGRYIAGIGSEYNDAPTLQRIDAHGAIAVPGFIDAHLHIESSMMTPVTFETATLPRGLTTVICDPHEIVNVMGEAGFAWFARCAEQARQNQYLQVSSCVPALEGCDVNGASFTLEQMLAWRDHPQVTGLAEMMDYPGVISGQNALLDKLDAFRHLTLDGHCPGLGGKELNAYIAAGIENCHESYLLEEGRRKLQLGMSLMIREGSAARNLNALAPLINEFNSPQCMLCTDDRNPWEIAHEGHIDALIRRLIEQHNVPLHVAYRVASWSTARHFGLNHLGLLAPGKQADIVLLSDARKVTVQQVLVKGEPIDAQTLQAEESARLAQSAPPYGNTIARQPVSASDFALQFTPGKRYRVIDVIHNELITHSRSSVYSENGFDRDDVCFIAVLERYGQRLDPACGLLGGFGLNEGALAATVSHDSHNIVVIGRSAEEMALAVNQVIQDGGGLCVVRNGQVQSHLPLPIAGLMSTDTAQSLAEQIDALKAAARECGPLPDEPFIQMAFLSLPVIPALKLTSQGLFDGEKFAFTTLEVTE.

It belongs to the metallo-dependent hydrolases superfamily. Adenine deaminase family. As to quaternary structure, homodimer. The cofactor is Mn(2+).

It catalyses the reaction adenine + H2O + H(+) = hypoxanthine + NH4(+). This Escherichia fergusonii (strain ATCC 35469 / DSM 13698 / CCUG 18766 / IAM 14443 / JCM 21226 / LMG 7866 / NBRC 102419 / NCTC 12128 / CDC 0568-73) protein is Adenine deaminase.